The chain runs to 234 residues: Proteasome subunit alpha type-2 (234 aa).

Ala2 is subject to N-acetylalanine. Tyr6 bears the Phosphotyrosine mark. Ser7, Ser14, and Ser16 each carry phosphoserine. Tyr24 bears the Phosphotyrosine mark. An N6-acetyllysine modification is found at Lys70. Phosphotyrosine occurs at positions 76 and 121. Position 171 is an N6-acetyllysine (Lys171).

It belongs to the peptidase T1A family. As to quaternary structure, the 26S proteasome consists of a 20S proteasome core and two 19S regulatory subunits. The 20S proteasome core is a barrel-shaped complex made of 28 subunits that are arranged in four stacked rings. The two outer rings are each formed by seven alpha subunits, and the two inner rings are formed by seven beta subunits. The proteolytic activity is exerted by three beta-subunits PSMB5, PSMB6 and PSMB7. In terms of processing, phosphorylated on tyrosine residues; which may be important for nuclear import.

It is found in the cytoplasm. The protein localises to the nucleus. Its function is as follows. Component of the 20S core proteasome complex involved in the proteolytic degradation of most intracellular proteins. This complex plays numerous essential roles within the cell by associating with different regulatory particles. Associated with two 19S regulatory particles, forms the 26S proteasome and thus participates in the ATP-dependent degradation of ubiquitinated proteins. The 26S proteasome plays a key role in the maintenance of protein homeostasis by removing misfolded or damaged proteins that could impair cellular functions, and by removing proteins whose functions are no longer required. Associated with the PA200 or PA28, the 20S proteasome mediates ubiquitin-independent protein degradation. This type of proteolysis is required in several pathways including spermatogenesis (20S-PA200 complex) or generation of a subset of MHC class I-presented antigenic peptides (20S-PA28 complex). In Bos taurus (Bovine), this protein is Proteasome subunit alpha type-2 (PSMA2).